Here is a 227-residue protein sequence, read N- to C-terminus: uncharacterized protein (227 aa).

2 consecutive transmembrane segments (helical) span residues 12-32 (IVLFLIINILPILILGLYLYA) and 80-100 (IILINGIYIGNHGSFGIKIPL).

The protein resides in the cell membrane. This is an uncharacterized protein from Methanocaldococcus jannaschii (strain ATCC 43067 / DSM 2661 / JAL-1 / JCM 10045 / NBRC 100440) (Methanococcus jannaschii).